The primary structure comprises 191 residues: Peptidyl-tRNA hydrolase (191 aa).

Residue tyrosine 14 coordinates tRNA. The active-site Proton acceptor is the histidine 19. Positions 64, 66, and 112 each coordinate tRNA.

The protein belongs to the PTH family. Monomer.

Its subcellular location is the cytoplasm. It carries out the reaction an N-acyl-L-alpha-aminoacyl-tRNA + H2O = an N-acyl-L-amino acid + a tRNA + H(+). Its function is as follows. Hydrolyzes ribosome-free peptidyl-tRNAs (with 1 or more amino acids incorporated), which drop off the ribosome during protein synthesis, or as a result of ribosome stalling. Functionally, catalyzes the release of premature peptidyl moieties from peptidyl-tRNA molecules trapped in stalled 50S ribosomal subunits, and thus maintains levels of free tRNAs and 50S ribosomes. In Novosphingobium aromaticivorans (strain ATCC 700278 / DSM 12444 / CCUG 56034 / CIP 105152 / NBRC 16084 / F199), this protein is Peptidyl-tRNA hydrolase.